The sequence spans 442 residues: 5-methylthioadenosine/S-adenosylhomocysteine deaminase (442 aa).

Residues histidine 70 and histidine 72 each contribute to the Zn(2+) site. Substrate contacts are provided by glutamate 99 and histidine 191. Residue histidine 218 coordinates Zn(2+). Residues glutamate 221 and aspartate 306 each coordinate substrate. Aspartate 306 provides a ligand contact to Zn(2+).

The protein belongs to the metallo-dependent hydrolases superfamily. MTA/SAH deaminase family. Requires Zn(2+) as cofactor.

It carries out the reaction S-adenosyl-L-homocysteine + H2O + H(+) = S-inosyl-L-homocysteine + NH4(+). It catalyses the reaction S-methyl-5'-thioadenosine + H2O + H(+) = S-methyl-5'-thioinosine + NH4(+). Functionally, catalyzes the deamination of 5-methylthioadenosine and S-adenosyl-L-homocysteine into 5-methylthioinosine and S-inosyl-L-homocysteine, respectively. Is also able to deaminate adenosine. The protein is 5-methylthioadenosine/S-adenosylhomocysteine deaminase of Nitratidesulfovibrio vulgaris (strain ATCC 29579 / DSM 644 / CCUG 34227 / NCIMB 8303 / VKM B-1760 / Hildenborough) (Desulfovibrio vulgaris).